Reading from the N-terminus, the 495-residue chain is MEPFTTFSLVASSLILLICWALVKANKPAKNLPPGPPKLPIIGNMHQLESQSPHRVLRKLSRKYGPIMHLQLGQVPTVVISTPRLVEEVVKHHDINFADRPTNTTSQIFYYNNQNVAWSSYGNYWRQIKKIVTLELLSVKKVRSFSSIRAEELTRAVKSVEPSVGSTINFRDLTSQTVNNMVSRATLGDVCKERHILLDTMNDILKTFNSFNVVNFFPSLQFLNVITGKKAKWLKIHKQLDHILENILEEHKSKPKGNQDDEDLIDVLLRVKDAGGQELPITNDNVKAITLEMLTAGTSSSSMTIEWAFCELMRHPEVMKKVQSDVRSAVKGNKVTEDDIQNMHYLKLVVKETLRLHGVPILVPRQNREDCNVLGYHIPAKTKILINAWACGTDPDTWEDPESFIPERFEKSSVSYFGTDFQLIPFGTGRRICPGVNFGIGTVEAVLSNFLYHFDWKLPDGVKPQDIDMTEVTGISTLPKYPLHIVPVSTVSQQK.

The helical; Signal-anchor for type II membrane protein transmembrane segment at 3-23 (PFTTFSLVASSLILLICWALV) threads the bilayer. N-linked (GlcNAc...) asparagine glycosylation occurs at N103. Position 433 (C433) interacts with heme.

This sequence belongs to the cytochrome P450 family. It depends on heme as a cofactor. As to expression, mostly expressed in leaves and flowers, and, to a lower extent, in roots and stems.

The protein resides in the membrane. It carries out the reaction germacra-1(10),4,11(13)-trien-12-oate + reduced [NADPH--hemoprotein reductase] + O2 = 8beta-hydroxygermacra-1(10),4,11(13)-trien-12-oate + oxidized [NADPH--hemoprotein reductase] + H2O + H(+). It catalyses the reaction germacra-1(10),4,11(13)-trien-12-oate + reduced [NADPH--hemoprotein reductase] + O2 = 8-epi-inunolide + oxidized [NADPH--hemoprotein reductase] + 2 H2O. The catalysed reaction is germacra-1(10),4,11(13)-trien-12-oate + reduced [NADPH--hemoprotein reductase] + O2 = 8alpha-hydroxygermacra-1(10),4,11(13)-trien-12-oate + oxidized [NADPH--hemoprotein reductase] + H2O + H(+). The protein operates within secondary metabolite biosynthesis; terpenoid biosynthesis. Functionally, involved in the biosynthesis of germacrene-derived sesquiterpene lactones. Hydroxylates germacrene A acid to 8-beta-hydroxy-germacrene A and 8-alpha-hydroxy-germacrene A acids. Unlike 8-alpha-hydroxy-germacrene A acid with is spontaneously converted into inunolide (12, 8-alpha), 8-beta-hydroxy-germacrene A cannot undergo spontaneous lactonization. The chain is Germacrene A acid 8-beta-hydroxylase from Inula hupehensis (Inula helianthus-aquatilis subsp. hupehensis).